The sequence spans 99 residues: Large ribosomal subunit protein uL23 (99 aa).

Belongs to the universal ribosomal protein uL23 family. In terms of assembly, part of the 50S ribosomal subunit. Contacts protein L29, and trigger factor when it is bound to the ribosome.

Its function is as follows. One of the early assembly proteins it binds 23S rRNA. One of the proteins that surrounds the polypeptide exit tunnel on the outside of the ribosome. Forms the main docking site for trigger factor binding to the ribosome. This chain is Large ribosomal subunit protein uL23, found in Hyphomonas neptunium (strain ATCC 15444).